We begin with the raw amino-acid sequence, 95 residues long: Protein TusB (95 aa).

This sequence belongs to the DsrH/TusB family. As to quaternary structure, heterohexamer, formed by a dimer of trimers. The hexameric TusBCD complex contains 2 copies each of TusB, TusC and TusD. The TusBCD complex interacts with TusE.

The protein resides in the cytoplasm. In terms of biological role, part of a sulfur-relay system required for 2-thiolation of 5-methylaminomethyl-2-thiouridine (mnm(5)s(2)U) at tRNA wobble positions. The chain is Protein TusB from Salmonella arizonae (strain ATCC BAA-731 / CDC346-86 / RSK2980).